The following is a 785-amino-acid chain: Protein PHTF2 (785 aa).

The region spanning 46 to 191 is the PHTF domain; that stretch reads IQCLIGAYDQ…VHCQIVSTRT (146 aa). The next 2 membrane-spanning stretches (helical) occupy residues 136-156 and 164-184; these read VIFFWLLVLYLLQVAAIVLFC and IPLTEVIGPIWLMLLLGTVHC. Disordered stretches follow at residues 190–239 and 304–401; these read RTPK…GTST and RPEE…PESE. Residues 200–209 show a composition bias toward basic residues; that stretch reads GKRRRKLRKA. A compositionally biased stretch (basic and acidic residues) spans 210–219; sequence AHLEVHREGD. 2 stretches are compositionally biased toward polar residues: residues 220-239 and 309-333; these read GSSTTDNTQEGAVQNHGTST and AWNTGTLRNGPSKDTQRTITNVSDE. N-linked (GlcNAc...) asparagine glycosylation is present at Asn329. A compositionally biased stretch (basic residues) spans 359–369; that stretch reads RNRKSHHYKKH. Over residues 378 to 390 the composition is skewed to low complexity; that stretch reads SGTSCSSRCSSSR. Residues 391-400 show a composition bias toward basic and acidic residues; sequence QDSESARPES. 4 helical membrane-spanning segments follow: residues 497–517, 553–573, 634–654, and 668–688; these read IGYQIFGNAVSLILGLTPFVF, VIISFVVRVSLVWIFFFLLCV, VIVSSAFLLTISVVFICCAQL, and WELVIWCISLTLFLLRFVTLG. N-linked (GlcNAc...) asparagine glycosylation is found at Asn697 and Asn756. A helical transmembrane segment spans residues 760–780; it reads VVILSAVSGVISDLLGFNLKL.

The protein localises to the membrane. This Homo sapiens (Human) protein is Protein PHTF2 (PHTF2).